The following is a 444-amino-acid chain: 3-isopropylmalate dehydratase large subunit (444 aa).

Residues Cys348, Cys408, and Cys411 each contribute to the [4Fe-4S] cluster site.

This sequence belongs to the aconitase/IPM isomerase family. LeuC type 1 subfamily. Heterodimer of LeuC and LeuD. [4Fe-4S] cluster is required as a cofactor.

The enzyme catalyses (2R,3S)-3-isopropylmalate = (2S)-2-isopropylmalate. It functions in the pathway amino-acid biosynthesis; L-leucine biosynthesis; L-leucine from 3-methyl-2-oxobutanoate: step 2/4. In terms of biological role, catalyzes the isomerization between 2-isopropylmalate and 3-isopropylmalate, via the formation of 2-isopropylmaleate. This Buchnera aphidicola subsp. Uroleucon ambrosiae protein is 3-isopropylmalate dehydratase large subunit.